The following is a 579-amino-acid chain: CTP synthase (579 aa).

Residues 1 to 281 (MPALRKHPQT…DAYVVRRLNL (281 aa)) are amidoligase domain. Serine 23 is a binding site for CTP. Serine 23 lines the UTP pocket. ATP is bound by residues 24–29 (SLGKGL) and aspartate 81. 2 residues coordinate Mg(2+): aspartate 81 and glutamate 155. CTP-binding positions include 162 to 164 (DIE), 202 to 207 (KTKPTQ), and lysine 238. Residues 202–207 (KTKPTQ) and lysine 238 each bind UTP. Residues 306 to 554 (RIALVGKYID…IGAALDYKAA (249 aa)) form the Glutamine amidotransferase type-1 domain. Glycine 369 lines the L-glutamine pocket. The active-site Nucleophile; for glutamine hydrolysis is cysteine 396. Residues 397–400 (LGLQ), glutamate 419, and arginine 480 each bind L-glutamine. Active-site residues include histidine 527 and glutamate 529.

It belongs to the CTP synthase family. Homotetramer.

The catalysed reaction is UTP + L-glutamine + ATP + H2O = CTP + L-glutamate + ADP + phosphate + 2 H(+). It carries out the reaction L-glutamine + H2O = L-glutamate + NH4(+). The enzyme catalyses UTP + NH4(+) + ATP = CTP + ADP + phosphate + 2 H(+). The protein operates within pyrimidine metabolism; CTP biosynthesis via de novo pathway; CTP from UDP: step 2/2. Allosterically activated by GTP, when glutamine is the substrate; GTP has no effect on the reaction when ammonia is the substrate. The allosteric effector GTP functions by stabilizing the protein conformation that binds the tetrahedral intermediate(s) formed during glutamine hydrolysis. Inhibited by the product CTP, via allosteric rather than competitive inhibition. In terms of biological role, catalyzes the ATP-dependent amination of UTP to CTP with either L-glutamine or ammonia as the source of nitrogen. Regulates intracellular CTP levels through interactions with the four ribonucleotide triphosphates. This is CTP synthase from Mycobacterium sp. (strain JLS).